The chain runs to 523 residues: Tryptophan 6-halogenase SttH (523 aa).

Residues Gly-14, Ser-40, Ile-43, Val-46, Val-48, and Ala-51 each coordinate FAD. The active site involves Lys-79. Pro-97 provides a ligand contact to L-tryptophan. FAD-binding residues include Val-203 and Leu-354. Chloride-binding residues include Thr-365 and Gly-366. Ile-367 provides a ligand contact to FAD. The L-tryptophan site is built by Tyr-456 and Tyr-457.

It belongs to the flavin-dependent halogenase family. Bacterial tryptophan halogenase subfamily. In terms of assembly, homodimer.

The enzyme catalyses L-tryptophan + FADH2 + chloride + O2 = 6-chloro-L-tryptophan + FAD + 2 H2O. It catalyses the reaction D-tryptophan + FADH2 + chloride + O2 = 6-chloro-D-tryptophan + FAD + 2 H2O. Catalyzes the chlorination of tryptophan (Trp) at C6 position to yield 6-chloro-tryptophan. Accepts both L and D-Trp as the substrates. The enzyme also uses bromide to yield 6-bromo-Trp. In vitro, can also catalyze the halogenation of 3-indolepropionic acid, N-methyltryptophan and non-indolic aromatic substrates such as kynurenine, anthranilamide and N-phenylanthranilic acid. This is Tryptophan 6-halogenase SttH from Streptomyces toxytricini (Actinomyces toxytricini).